The sequence spans 75 residues: Lividin-3 (75 aa).

A signal peptide spans 1–22 (MFTLKKSLLLLFFLGTISLSLC). Residues 23–40 (EEERDADEDEGEMTEEEV) constitute a propeptide that is removed on maturation. A disulfide bridge links C69 with C75.

As to expression, expressed by the skin glands.

It is found in the secreted. Its function is as follows. Antimicrobial peptide. This Odorrana livida (Green mountain frog) protein is Lividin-3.